The sequence spans 127 residues: Aspartate 1-decarboxylase (127 aa).

The active-site Schiff-base intermediate with substrate; via pyruvic acid is Ser-25. Ser-25 is modified (pyruvic acid (Ser)). Position 57 (Thr-57) interacts with substrate. Tyr-58 (proton donor) is an active-site residue. 73–75 serves as a coordination point for substrate; the sequence is GAA.

Belongs to the PanD family. As to quaternary structure, heterooctamer of four alpha and four beta subunits. Pyruvate serves as cofactor. Is synthesized initially as an inactive proenzyme, which is activated by self-cleavage at a specific serine bond to produce a beta-subunit with a hydroxyl group at its C-terminus and an alpha-subunit with a pyruvoyl group at its N-terminus.

It localises to the cytoplasm. It catalyses the reaction L-aspartate + H(+) = beta-alanine + CO2. The protein operates within cofactor biosynthesis; (R)-pantothenate biosynthesis; beta-alanine from L-aspartate: step 1/1. In terms of biological role, catalyzes the pyruvoyl-dependent decarboxylation of aspartate to produce beta-alanine. This is Aspartate 1-decarboxylase from Shouchella clausii (strain KSM-K16) (Alkalihalobacillus clausii).